The chain runs to 190 residues: Transcription termination/antitermination protein NusG (190 aa).

Residues 141 to 165 form the KOW domain; it reads GDMVRVTSGPFADFSGVVSEVNAPQ.

This sequence belongs to the NusG family.

In terms of biological role, participates in transcription elongation, termination and antitermination. This chain is Transcription termination/antitermination protein NusG, found in Deinococcus radiodurans (strain ATCC 13939 / DSM 20539 / JCM 16871 / CCUG 27074 / LMG 4051 / NBRC 15346 / NCIMB 9279 / VKM B-1422 / R1).